A 935-amino-acid polypeptide reads, in one-letter code: Coiled-coil domain-containing protein 191 (935 aa).

4 coiled-coil regions span residues 189–324 (RLTM…ENQQ), 366–438 (YTRS…ALLK), 554–589 (RHVFQQQLIEKQKKKLQEQQKTILELKKNQRLAEAQ), and 660–740 (KAME…LEAI). Disordered stretches follow at residues 596–661 (SAVT…ILKA) and 678–715 (EKKKKQEEEKLAQLKAQEEERQKREAEEKEAQLERKRE).

In Macaca fascicularis (Crab-eating macaque), this protein is Coiled-coil domain-containing protein 191 (CCDC191).